A 1253-amino-acid polypeptide reads, in one-letter code: Structural polyprotein (1253 aa).

The host transcription inhibition stretch occupies residues 37–71 (FQAQQMQQLISAVNALTMRQNAIAPARPPKPKKKK). The tract at residues 58–109 (AIAPARPPKPKKKKTTKPKPKTQPKKINGKTQQQKKKDKQADKKKKKPGKRE) is disordered. A Nuclear localization signal motif is present at residues 64–105 (PPKPKKKKTTKPKPKTQPKKINGKTQQQKKKDKQADKKKKKP). The segment covering 65–107 (PKPKKKKTTKPKPKTQPKKINGKTQQQKKKDKQADKKKKKPGK) has biased composition (basic residues). Positions 87-120 (KTQQQKKKDKQADKKKKKPGKRERMCMKIENDCI) are binding to the viral RNA. Positions 105 to 119 (PGKRERMCMKIENDC) are ribosome-binding. C119 and C134 are oxidised to a cystine. A Peptidase S3 domain is found at 119-267 (CIFEVKHEGK…RVTPEGSEEW (149 aa)). The active-site Charge relay system is H145. The Nuclear export signal motif lies at 150 to 160 (IDNADLAKLAF). The interval 161–166 (KKSSKY) is interaction with spike glycoprotein E2. D167 serves as the catalytic Charge relay system. Residues 189-199 (PEGHYNWHHGA) are dimerization of the capsid protein. S219 acts as the Charge relay system in catalysis. The dimerization of the capsid protein stretch occupies residues 225–229 (DNKGR). Residues 268 to 701 (SAPLITAMCV…YGLYPAATVS (434 aa)) lie on the Extracellular side of the membrane. Disulfide bonds link C276/C285, C290/C294, and C293/C325. The N-linked (GlcNAc...) asparagine; by host glycan is linked to N280. N327 carries an N-linked (GlcNAc...) asparagine; by host glycan. Intrachain disulfides connect C352/C458, C355/C361, C424/C438, C486/C598, C534/C558, and C536/C553. N-linked (GlcNAc...) asparagine; by host glycosylation is present at N533. N595 carries an N-linked (GlcNAc...) asparagine; by host glycan. A helical transmembrane segment spans residues 702–722 (AVVGMSLLALISIFASCYMLV). A lipid anchor (S-stearoyl cysteine; by host) is attached at C718. The interaction with the capsid protein stretch occupies residues 723-727 (AARSK). Residues 723 to 755 (AARSKCLTPYALTPGAAVPWTLGILCCAPRAHA) are Cytoplasmic-facing. C728 is lipidated: S-stearoyl cysteine; by host. The tract at residues 728 to 748 (CLTPYALTPGAAVPWTLGILC) is transient transmembrane before p62-6K protein processing. C728 and C749 are disulfide-bonded. Residues C748 and C749 are each lipidated (S-palmitoyl cysteine; by host). At 756-770 (ASVAETMAYLWDQNQ) the chain is on the extracellular side. A helical transmembrane segment spans residues 771–791 (ALFWLEFAAPVACILIITYCL). Position 792 (R792) is a topological domain, cytoplasmic. The helical transmembrane segment at 793–813 (NVLCCCKSLSFLVLLSLGATA) threads the bilayer. The Extracellular portion of the chain corresponds to 814–1230 (RAYEHSTVMP…ALSWVQKISG (417 aa)). 4 disulfides stabilise this stretch: C864/C929, C877/C909, C878/C911, and C883/C893. The E1 fusion peptide loop stretch occupies residues 899–916 (VYPFMWGGAYCFCDSENT). 2 N-linked (GlcNAc...) asparagine; by host glycosylation sites follow: N956 and N1085. Intrachain disulfides connect C1074–C1086, C1116–C1191, C1121–C1195, and C1143–C1185. The tract at residues 1112-1192 (IDLTCTVATC…SLCSARATCS (81 aa)) is E1-DIII; interaction with host receptor VLDLR. A helical transmembrane segment spans residues 1231-1251 (GLGAFAIGAILVLVVVTCIGL). C1248 carries the S-stearoyl cysteine; by host lipid modification. Residues 1252-1253 (RR) are Cytoplasmic-facing.

As to quaternary structure, homodimer. Homomultimer. Interacts with host karyopherin KPNA4; this interaction allows the nuclear import of the viral capsid protein. Interacts with spike glycoprotein E2. Interacts with host IRAK1; the interaction leads to inhibition of IRAK1-dependent signaling. In terms of assembly, the precursor of protein E3/E2 and E1 form a heterodimer shortly after synthesis. The precursor of protein E3/E2 and E1 form a heterodimer shortly after synthesis. Processing of the precursor of protein E3/E2 into E2 and E3 results in a heterodimer of the spike glycoproteins E2 and E1. Spike at virion surface are constituted of a trimer of E2-E1 heterodimers. E2-E1 heterodimers interact with host VLDLR or LRP8/APOER2 to mediate viral entry. After target cell attachment and endocytosis, E1 change conformation to form homotrimers. Interacts with 6K protein. Interacts (via E1-DIII) with host VLDLR (via class A repeats); this interaction mediates viral entry into host cell. As to quaternary structure, interacts with spike glycoprotein E1. Processing of the precursor of protein E3/E2 into E2 and E3 results in a heterodimer of the spike glycoproteins E2 and E1. Spike at virion surface are constituted of a trimer of E2-E1 heterodimers. E2-E1 heterodimers interact with host VLDLR or LRP8/APOER2 to mediate viral entry. Interacts with 6K protein. In terms of assembly, oligomer. Interacts with spike glycoprotein E1. Interacts with spike glycoprotein E2. Post-translationally, specific enzymatic cleavages in vivo yield mature proteins. Capsid protein is auto-cleaved during polyprotein translation, unmasking a signal peptide at the N-terminus of the precursor of E3/E2. The remaining polyprotein is then targeted to the host endoplasmic reticulum, where host signal peptidase cleaves it into pE2, 6K and E1 proteins. pE2 is further processed to mature E3 and E2 by host furin in trans-Golgi vesicle. Protein processing process takes about 30 minutes at physiologic temperatures. The folding of the p62/6K/E1 precursor requires the formation of intrachain disulfide bonds and has been shown to involve a transient covalent interaction between the nascent and newly synthesized heterodimer and the host-cell chaperones, P4HB/PDI and PDIA3/ERp57. The folding pathway also includes non covalent interaction with human CANX/calnexin and CALR/calreticulin. In terms of processing, palmitoylated via thioester bonds. These palmitoylations may induce disruption of the C-terminus transmembrane. This would result in the reorientation of E2 C-terminus from lumenal to cytoplasmic side. Envelope E1, E2 and E3 proteins are N-glycosylated. Post-translationally, stearoylated. In terms of processing, palmitoylated via thioester bonds with about four covalently bound fatty acids per molecule.

It is found in the virion. It localises to the host cytoplasm. The protein localises to the host cell membrane. Its subcellular location is the host nucleus. The protein resides in the virion membrane. It is found in the host Golgi apparatus. It localises to the host trans-Golgi network. The protein localises to the host endoplasmic reticulum. The enzyme catalyses Autocatalytic release of the core protein from the N-terminus of the togavirus structural polyprotein by hydrolysis of a -Trp-|-Ser- bond.. Forms an icosahedral capsid with a T=4 symmetry composed of 240 copies of the capsid protein surrounded by a lipid membrane through which penetrate 80 spikes composed of trimers of E1-E2 heterodimers. The capsid protein binds to the viral RNA genome at a site adjacent to a ribosome binding site for viral genome translation following genome release. Possesses a protease activity that results in its autocatalytic cleavage from the nascent structural protein. Following its self-cleavage, the capsid protein transiently associates with ribosomes, and within several minutes the protein binds to viral RNA and rapidly assembles into icosahedric core particles. The resulting nucleocapsid eventually associates with the cytoplasmic domain of the spike glycoprotein E2 at the cell membrane, leading to budding and formation of mature virions. In case of infection, new virions attach to target cells and after clathrin-mediated endocytosis their membrane fuses with the host endosomal membrane. This leads to the release of the nucleocapsid into the cytoplasm, followed by an uncoating event necessary for the genomic RNA to become accessible. The uncoating might be triggered by the interaction of capsid proteins with ribosomes. Binding of ribosomes would release the genomic RNA since the same region is genomic RNA-binding and ribosome-binding. Specifically inhibits interleukin-1 receptor-associated kinase 1/IRAK1-dependent signaling during viral entry, representing a means by which the alphaviruses may evade innate immune detection and activation prior to viral gene expression. In terms of biological role, provides the signal sequence for the translocation of the precursor of protein E3/E2 to the host endoplasmic reticulum. Furin-cleaved E3 remains associated with spike glycoprotein E1 and mediates pH protection of the latter during the transport via the secretory pathway. After virion release from the host cell, the assembly protein E3 is gradually released in the extracellular space. Its function is as follows. Plays a role in viral attachment to target host cell, by binding to the cell receptors VLDLR or LRP8/APOER2. The host LDLR can act as a cell receptor for viral entry. Synthesized as a p62 precursor which is processed by furin at the cell membrane just before virion budding, giving rise to E2-E1 heterodimer. The p62-E1 heterodimer is stable, whereas E2-E1 is unstable and dissociate at low pH. p62 is processed at the last step, presumably to avoid E1 fusion activation before its final export to cell surface. E2 C-terminus contains a transitory transmembrane that would be disrupted by palmitoylation, resulting in reorientation of the C-terminal tail from lumenal to cytoplasmic side. This step is critical since E2 C-terminus is involved in budding by interacting with capsid proteins. This release of E2 C-terminus in cytoplasm occurs lately in protein export, and precludes premature assembly of particles at the endoplasmic reticulum membrane. Functionally, acts as a viroporin that participates in virus glycoprotein processing and transport to the plasma membrane, cell permeabilization and budding of viral particles. Disrupts the calcium homeostasis of the cell, probably at the endoplasmic reticulum level. This leads to cytoplasmic calcium elevation. Because of its lipophilic properties, the 6K protein is postulated to influence the selection of lipids that interact with the transmembrane domains of the glycoproteins, which, in turn, affects the deformability of the bilayer required for the extreme curvature that occurs as budding proceeds. Present in low amount in virions, about 3% compared to viral glycoproteins. Class II viral fusion protein. Fusion activity is inactive as long as E1 is bound to E2 in mature virion. After virus attachment to target cell via host VLDLR or LRP8/APOER2 and endocytosis, acidification of the endosome induces dissociation of E1/E2 heterodimer and concomitant trimerization of the E1 subunits. This E1 trimer is fusion active, and promotes release of viral nucleocapsid in cytoplasm after endosome and viral membrane fusion. Efficient fusion requires the presence of cholesterol and sphingolipid in the target membrane. Fusion is optimal at levels of about 1 molecule of cholesterol per 2 molecules of phospholipids, and is specific for sterols containing a 3-beta-hydroxyl group. In Aedes (Middle-African hedgehog), this protein is Structural polyprotein.